A 460-amino-acid polypeptide reads, in one-letter code: Mitochondrial distribution and morphology protein 34 (460 aa).

The SMP-LTD domain occupies methionine 1–glutamine 196. The segment covering histidine 304–lysine 321 has biased composition (basic residues). Disordered stretches follow at residues histidine 304–glutamate 356 and glutamate 368–glycine 460. Low complexity-rich tracts occupy residues serine 330–arginine 355 and serine 393–leucine 405.

It belongs to the MDM34 family. Component of the ER-mitochondria encounter structure (ERMES) or MDM complex, composed of MMM1, MDM10, MDM12 and MDM34.

The protein localises to the mitochondrion outer membrane. Functionally, component of the ERMES/MDM complex, which serves as a molecular tether to connect the endoplasmic reticulum (ER) and mitochondria. Components of this complex are involved in the control of mitochondrial shape and protein biogenesis, and function in nonvesicular lipid trafficking between the ER and mitochondria. MDM34 is required for the interaction of the ER-resident membrane protein MMM1 and the outer mitochondrial membrane-resident beta-barrel protein MDM10. The sequence is that of Mitochondrial distribution and morphology protein 34 from Yarrowia lipolytica (strain CLIB 122 / E 150) (Yeast).